The chain runs to 363 residues: Type 3 secretion system translocon protein SctB (363 aa).

Residues 99-120 (ISSLSSNAVSLIISVAVLLSAL) form a helical membrane-spanning segment.

It belongs to the SctB/SipC family. In terms of assembly, the core secretion machinery of the T3SS is composed of approximately 20 different proteins, including cytoplasmic components, a base, an export apparatus and a needle. This subunit is involved in the formation of a pore, called the translocon, in host membrane.

The protein resides in the secreted. It localises to the host membrane. Functionally, component of the type III secretion system (T3SS), also called injectisome, which is used to inject bacterial effector proteins into eukaryotic host cells. IpaB/SctE and IpaC/SctB are inserted into the host membrane where they form a pore and allow the translocation of effector proteins into the cytosol of target cells. The protein is Type 3 secretion system translocon protein SctB of Shigella dysenteriae.